Here is a 651-residue protein sequence, read N- to C-terminus: BTB/POZ domain-containing protein At3g44820 (651 aa).

The region spanning 25–96 (SDITVVVDDV…CYGARVDITS (72 aa)) is the BTB domain. The NPH3 domain occupies 211 to 509 (DWWYEDISYL…LQVLFFEQMH (299 aa)). Residues 611–651 (DAKNDTVQNSVSSTPRSATADHTLPRSSRHSKHRKSFSFFG) are disordered. Over residues 615–627 (DTVQNSVSSTPRS) the composition is skewed to polar residues. Over residues 637–651 (SSRHSKHRKSFSFFG) the composition is skewed to basic residues.

The protein belongs to the NPH3 family.

It functions in the pathway protein modification; protein ubiquitination. Functionally, may act as a substrate-specific adapter of an E3 ubiquitin-protein ligase complex (CUL3-RBX1-BTB) which mediates the ubiquitination and subsequent proteasomal degradation of target proteins. The polypeptide is BTB/POZ domain-containing protein At3g44820 (Arabidopsis thaliana (Mouse-ear cress)).